A 748-amino-acid chain; its full sequence is MEIRRPSRHGNHPDRTYQRTYKACISCRQRKAKCDLGTGPDGLPLGPPCAKCRREQKPCLFDEKRAWERVKKRGTQSTSNLANSMMRTVVSSGNDALNILFEAANAQSQEDSMIESDSLPETEQHRSGHPVTSEGSSNQIDLTVPPDVLEKAMRPVELSHVSKDVLSTWEACRFVRMGWFTAREAVTFIDLFFKNMSILSPVLTDFYADHKNHRWLIAHDPVLCCTILMISSRYHVLPGVGGQSRNFFIHHRLWQHCQQLVTRLIFGQELSSQPKIRNIGTIEALLLMSDWHPRSLHFPPESDGWDSDLVTIDLESTEYGDDGSNSSAKRWAKDMSEPAKRSDQMSWMLLGSALSLAHELGIYETGDKARDAFVAYERFMTKDQMRLRRQRAQRLLYVYINQLAWRIGCVSLMPQGLSHSILNRQTSRELSQYGEEWLTFMDSWMDLTKLAKSVTDMFFPSVTFARQQLQSGRYIDLLDHFRPLLDKWKERYLQPQLHDKPFYDDIFIEYHFVRVYTHSVGMQAVVERAIADGNADEEEVRPMNIDPIDYEYIQEVIDGCCQILEKVTQLADIGALRFSPVRIFVRITSASIFLMKALSLGARQAKLRESLDVLERTIQALRSNALDDIHLSTRYATLLETHVSRLRRHLVASCKSLKRRRESTTRHSMVPPSYASATSDEHAPLITNPPVPQNMSDMGFTPSLNDIAADDWLSLPFDPSMAPFSISSGGQFPAYEGGGLNFLWNLPS.

A DNA-binding region (zn(2)-C6 fungal-type) is located at residues 24–59 (CISCRQRKAKCDLGTGPDGLPLGPPCAKCRREQKPC). Disordered regions lie at residues 108–142 (SQEDSMIESDSLPETEQHRSGHPVTSEGSSNQIDL) and 661–683 (RESTTRHSMVPPSYASATSDEHA).

Its subcellular location is the nucleus. Transcription factor; part of the L-tyrosine degradation gene cluster that mediates the biosynthesis of the brownish pigment pyomelanin as an alternative melanin. Acts as a transcriptional activator for the genes of the tyrosine degradation cluster. This Aspergillus fumigatus (strain ATCC MYA-4609 / CBS 101355 / FGSC A1100 / Af293) (Neosartorya fumigata) protein is Transcription factor hmgR.